Consider the following 246-residue polypeptide: Transcription factor A, mitochondrial (246 aa).

The transit peptide at 1-42 directs the protein to the mitochondrion; the sequence is MAFLRSMWGVLSALGRSGAELCTGCGSRLRSPFSFVYLPRWF. The segment at residues 50 to 118 is a DNA-binding region (HMG box 1); the sequence is PKKPVSSYLR…VYKEEISRFK (69 aa). Ser-55, Ser-56, and Ser-61 each carry phosphoserine; by PKA. Position 122 is a phosphothreonine (Thr-122). The segment at residues 155 to 219 is a DNA-binding region (HMG box 2); it reads PKRPRSAYNV…RYHNEMKSWE (65 aa). Ser-160 carries the post-translational modification Phosphoserine; by PKA. Ser-193 and Ser-195 each carry phosphoserine.

Monomer; binds DNA as a monomer. Homodimer. Component of the mitochondrial transcription initiation complex, composed at least of TFB2M, TFAM and POLRMT. In this complex TFAM recruits POLRMT to the promoter whereas TFB2M induces structural changes in POLRMT to enable promoter opening and trapping of the DNA non-template strand. Upon metabolic stress, forms a complex composed of FOXO3, SIRT3, TFAM and POLRMT. Interacts with TFB1M and TFB2M. Interacts with CLPX; this enhances DNA-binding. Phosphorylation by PKA within the HMG box 1 impairs DNA binding and promotes degradation by the AAA+ Lon protease.

The protein resides in the mitochondrion. The protein localises to the mitochondrion matrix. It is found in the mitochondrion nucleoid. Binds to the mitochondrial light strand promoter and functions in mitochondrial transcription regulation. Component of the mitochondrial transcription initiation complex, composed at least of TFB2M, TFAM and POLRMT that is required for basal transcription of mitochondrial DNA. In this complex, TFAM recruits POLRMT to a specific promoter whereas TFB2M induces structural changes in POLRMT to enable promoter opening and trapping of the DNA non-template strand. Required for accurate and efficient promoter recognition by the mitochondrial RNA polymerase. Promotes transcription initiation from the HSP1 and the light strand promoter by binding immediately upstream of transcriptional start sites. Is able to unwind DNA. Bends the mitochondrial light strand promoter DNA into a U-turn shape via its HMG boxes. Required for maintenance of normal levels of mitochondrial DNA. May play a role in organizing and compacting mitochondrial DNA. The sequence is that of Transcription factor A, mitochondrial from Homo sapiens (Human).